The following is a 64-amino-acid chain: Large ribosomal subunit protein uL29 (64 aa).

Belongs to the universal ribosomal protein uL29 family.

The sequence is that of Large ribosomal subunit protein uL29 from Verminephrobacter eiseniae (strain EF01-2).